A 331-amino-acid chain; its full sequence is Dof zinc finger protein DOF1.1 (331 aa).

The Dof-type zinc finger occupies 77-131 (LKCPRCDSSNTKFCYYNNYNLTQPRHFCKGCRRYWTQGGALRNVPVGGGCRRNNK). Zn(2+)-binding residues include C79, C82, C104, and C107. Disordered stretches follow at residues 121-166 (PVGG…TNHQ) and 291-331 (EEQP…NDLL). Low complexity predominate over residues 135–160 (NGNLKSSSSSSKQSSSVNAQSPSSGQ). Residues 305–316 (GLTSPGNQTNQY) show a composition bias toward polar residues.

In terms of assembly, interacts with OBF4. As to expression, expressed in the vasculature (mainly in the phloem and associated cell files) of cotyledons, leaves, roots, flower stalks and petals. The PEAR proteins (e.g. DOF2.4, DOF5.1, DOF3.2, DOF1.1, DOF5.6 and DOF5.3) form a short-range concentration gradient that peaks at protophloem sieve elements (PSE).

It is found in the nucleus. In terms of biological role, transcription factor that binds specifically to a 5'-AA[AG]G-3' consensus core sequence. Enhances the DNA binding of OBF transcription factors to OCS elements. Involved in the regulation of root development. The PEAR proteins (e.g. DOF2.4, DOF5.1, DOF3.2, DOF1.1, DOF5.6 and DOF5.3) activate gene expression that promotes radial growth of protophloem sieve elements. Element of a regulatory network controlling indole glucosinolates (IGS) biosynthesis, probably by inducing the expression of accurate genes (e.g. CYP83B1). Promotes apical dominance. This is Dof zinc finger protein DOF1.1 from Arabidopsis thaliana (Mouse-ear cress).